Here is an 893-residue protein sequence, read N- to C-terminus: UPF0182 protein CLI_0022 (893 aa).

A run of 7 helical transmembrane segments spans residues 9 to 29, 49 to 69, 94 to 114, 154 to 174, 202 to 222, 246 to 266, and 273 to 293; these read IPLF…NFII, AIII…WMYY, LFFI…SSSY, VIIS…FILE, LAIV…IKIW, FYKI…LSIV, and VSIC…ASFL.

The protein belongs to the UPF0182 family.

The protein resides in the cell membrane. In Clostridium botulinum (strain Langeland / NCTC 10281 / Type F), this protein is UPF0182 protein CLI_0022.